Reading from the N-terminus, the 369-residue chain is MPPTPCSLCHTARALVKRPKTGQQVCKDCFFEVFETEVHNTIVEGEGIFKRGERVAIGASGGKDSTVLAHVLSVLNKRYDYGLDLYLLSIDEGITGYRDDSLETVKQNQAEYGLPLKILSYSELYGWTMDKIVEQVGKKNNCTFCGVFRRQALDRGAAQLGVDHIVTGHNADDIAETVLMNIMRGDIARLARCTAVTTQSEDTIKRSKPFKYAYEKEIVMYAYFKKLTYFSTECIYSPDAYRGHARVFLKDLEAVRPSAIVDIIHSGESFVLEQSVQRGMKALQTCLRCGYISSNDLCKACALLEGLESGLSRSALRQTQESTSAAPEGHRTIPMFERYASLNGTPRTPPTPAEPVEGIERAVRTIEIV.

This sequence belongs to the TtcA family. CTU1/NCS6/ATPBD3 subfamily.

Its subcellular location is the cytoplasm. It participates in tRNA modification; 5-methoxycarbonylmethyl-2-thiouridine-tRNA biosynthesis. Plays a central role in 2-thiolation of mcm(5)S(2)U at tRNA wobble positions of tRNA(Lys), tRNA(Glu) and tRNA(Gln). Directly binds tRNAs and probably acts by catalyzing adenylation of tRNAs, an intermediate required for 2-thiolation. It is unclear whether it acts as a sulfurtransferase that transfers sulfur from thiocarboxylated URM1 onto the uridine of tRNAs at wobble position. Prior mcm(5) tRNA modification by the elongator complex is required for 2-thiolation. May also be involved in protein urmylation. The protein is Cytoplasmic tRNA 2-thiolation protein 1 of Cryptococcus neoformans var. neoformans serotype D (strain JEC21 / ATCC MYA-565) (Filobasidiella neoformans).